The following is a 495-amino-acid chain: RuBisCO large subunit-binding protein subunit alpha (495 aa).

The protein belongs to the chaperonin (HSP60) family. Oligomer of probably six alpha and six beta subunits.

Its subcellular location is the plastid. The protein localises to the chloroplast. Its function is as follows. This protein binds RuBisCO small and large subunits and is implicated in the assembly of the enzyme oligomer. This chain is RuBisCO large subunit-binding protein subunit alpha, found in Ricinus communis (Castor bean).